Here is a 395-residue protein sequence, read N- to C-terminus: Elongation factor Tu (395 aa).

A tr-type G domain is found at 10 to 204; that stretch reads KPHVNVGTIG…AVDEYIPEPT (195 aa). The G1 stretch occupies residues 19–26; the sequence is GHVDHGKT. Residue 19–26 participates in GTP binding; it reads GHVDHGKT. Thr-26 contributes to the Mg(2+) binding site. The segment at 60–64 is G2; sequence GITIA. The G3 stretch occupies residues 81–84; the sequence is DCPG. Residues 81 to 85 and 136 to 139 contribute to the GTP site; these read DCPGH and NKVD. The segment at 136–139 is G4; the sequence is NKVD. The tract at residues 174–176 is G5; sequence SAL.

Belongs to the TRAFAC class translation factor GTPase superfamily. Classic translation factor GTPase family. EF-Tu/EF-1A subfamily. In terms of assembly, monomer.

Its subcellular location is the cytoplasm. It catalyses the reaction GTP + H2O = GDP + phosphate + H(+). In terms of biological role, GTP hydrolase that promotes the GTP-dependent binding of aminoacyl-tRNA to the A-site of ribosomes during protein biosynthesis. This is Elongation factor Tu from Exiguobacterium sibiricum (strain DSM 17290 / CCUG 55495 / CIP 109462 / JCM 13490 / 255-15).